Consider the following 452-residue polypeptide: Bifunctional protein GlmU (452 aa).

Residues 1–232 (MTTRTSLTIV…EDEVRGINTK (232 aa)) are pyrophosphorylase. UDP-N-acetyl-alpha-D-glucosamine-binding positions include 11-14 (LAAG), Lys-25, Gln-78, and 83-84 (GT). Asp-108 lines the Mg(2+) pocket. The UDP-N-acetyl-alpha-D-glucosamine site is built by Gly-144, Glu-158, Asn-173, and Asn-230. Asn-230 contributes to the Mg(2+) binding site. The linker stretch occupies residues 233-253 (AQLAEAEAVMQTRLRQAAMTA). An N-acetyltransferase region spans residues 254 to 452 (GVTLISPETI…SARARKPKTS (199 aa)). UDP-N-acetyl-alpha-D-glucosamine contacts are provided by Arg-319 and Lys-337. His-349 acts as the Proton acceptor in catalysis. UDP-N-acetyl-alpha-D-glucosamine contacts are provided by Tyr-352 and Asn-363. Residues Ala-366, 372–373 (NY), Ser-391, Ser-409, and Arg-426 contribute to the acetyl-CoA site.

The protein in the N-terminal section; belongs to the N-acetylglucosamine-1-phosphate uridyltransferase family. This sequence in the C-terminal section; belongs to the transferase hexapeptide repeat family. Homotrimer. It depends on Mg(2+) as a cofactor.

The protein resides in the cytoplasm. It catalyses the reaction alpha-D-glucosamine 1-phosphate + acetyl-CoA = N-acetyl-alpha-D-glucosamine 1-phosphate + CoA + H(+). The catalysed reaction is N-acetyl-alpha-D-glucosamine 1-phosphate + UTP + H(+) = UDP-N-acetyl-alpha-D-glucosamine + diphosphate. It participates in nucleotide-sugar biosynthesis; UDP-N-acetyl-alpha-D-glucosamine biosynthesis; N-acetyl-alpha-D-glucosamine 1-phosphate from alpha-D-glucosamine 6-phosphate (route II): step 2/2. Its pathway is nucleotide-sugar biosynthesis; UDP-N-acetyl-alpha-D-glucosamine biosynthesis; UDP-N-acetyl-alpha-D-glucosamine from N-acetyl-alpha-D-glucosamine 1-phosphate: step 1/1. It functions in the pathway bacterial outer membrane biogenesis; LPS lipid A biosynthesis. In terms of biological role, catalyzes the last two sequential reactions in the de novo biosynthetic pathway for UDP-N-acetylglucosamine (UDP-GlcNAc). The C-terminal domain catalyzes the transfer of acetyl group from acetyl coenzyme A to glucosamine-1-phosphate (GlcN-1-P) to produce N-acetylglucosamine-1-phosphate (GlcNAc-1-P), which is converted into UDP-GlcNAc by the transfer of uridine 5-monophosphate (from uridine 5-triphosphate), a reaction catalyzed by the N-terminal domain. This chain is Bifunctional protein GlmU, found in Rhodopseudomonas palustris (strain BisB5).